Here is a 176-residue protein sequence, read N- to C-terminus: Isopentenyl-diphosphate Delta-isomerase (176 aa).

Mn(2+) is bound by residues histidine 23 and histidine 29. In terms of domain architecture, Nudix hydrolase spans 27-161 (LRHLAISVFV…PERFTPWLKI (135 aa)). Residue cysteine 63 is part of the active site. Cysteine 63 contributes to the Mg(2+) binding site. Residue histidine 65 participates in Mn(2+) binding. Residue glutamate 83 coordinates Mg(2+). Residues glutamate 109 and glutamate 111 each contribute to the Mn(2+) site. Residue glutamate 111 is part of the active site.

Belongs to the IPP isomerase type 1 family. Mg(2+) is required as a cofactor. Requires Mn(2+) as cofactor.

It is found in the cytoplasm. The catalysed reaction is isopentenyl diphosphate = dimethylallyl diphosphate. It functions in the pathway isoprenoid biosynthesis; dimethylallyl diphosphate biosynthesis; dimethylallyl diphosphate from isopentenyl diphosphate: step 1/1. It participates in porphyrin-containing compound metabolism; chlorophyll biosynthesis. Its function is as follows. Catalyzes the 1,3-allylic rearrangement of the homoallylic substrate isopentenyl (IPP) to its highly electrophilic allylic isomer, dimethylallyl diphosphate (DMAPP). This chain is Isopentenyl-diphosphate Delta-isomerase, found in Rhodobacter capsulatus (strain ATCC BAA-309 / NBRC 16581 / SB1003).